A 151-amino-acid polypeptide reads, in one-letter code: FAD synthase (151 aa).

ATP is bound by residues 12-13 (TF), 17-20 (HPGH), D97, and Y125.

Belongs to the archaeal FAD synthase family. In terms of assembly, homodimer. A divalent metal cation serves as cofactor.

It catalyses the reaction FMN + ATP + H(+) = FAD + diphosphate. It functions in the pathway cofactor biosynthesis; FAD biosynthesis; FAD from FMN: step 1/1. In terms of biological role, catalyzes the transfer of the AMP portion of ATP to flavin mononucleotide (FMN) to produce flavin adenine dinucleotide (FAD) coenzyme. The polypeptide is FAD synthase (Methanocaldococcus sp. (strain FS406-22)).